Reading from the N-terminus, the 334-residue chain is Ornithine carbamoyltransferase (334 aa).

Carbamoyl phosphate is bound by residues 56–59 (STRT), glutamine 83, arginine 107, and 134–137 (HPTQ). Residues asparagine 168, aspartate 232, and 236–237 (SM) each bind L-ornithine. Carbamoyl phosphate-binding positions include 274-275 (CL) and arginine 320.

The protein belongs to the aspartate/ornithine carbamoyltransferase superfamily. OTCase family.

The protein resides in the cytoplasm. It carries out the reaction carbamoyl phosphate + L-ornithine = L-citrulline + phosphate + H(+). It functions in the pathway amino-acid biosynthesis; L-arginine biosynthesis; L-arginine from L-ornithine and carbamoyl phosphate: step 1/3. Its function is as follows. Reversibly catalyzes the transfer of the carbamoyl group from carbamoyl phosphate (CP) to the N(epsilon) atom of ornithine (ORN) to produce L-citrulline. The sequence is that of Ornithine carbamoyltransferase from Shigella boydii serotype 4 (strain Sb227).